The sequence spans 128 residues: Sulfurtransferase TusD (128 aa).

The active-site Cysteine persulfide intermediate is the C78.

The protein belongs to the DsrE/TusD family. As to quaternary structure, heterohexamer, formed by a dimer of trimers. The hexameric TusBCD complex contains 2 copies each of TusB, TusC and TusD. The TusBCD complex interacts with TusE.

The protein resides in the cytoplasm. Its function is as follows. Part of a sulfur-relay system required for 2-thiolation of 5-methylaminomethyl-2-thiouridine (mnm(5)s(2)U) at tRNA wobble positions. Accepts sulfur from TusA and transfers it in turn to TusE. This Klebsiella pneumoniae (strain 342) protein is Sulfurtransferase TusD.